The following is a 72-amino-acid chain: Large ribosomal subunit protein bL32 (72 aa).

Belongs to the bacterial ribosomal protein bL32 family.

In Dehalococcoides mccartyi (strain ATCC BAA-2266 / KCTC 15142 / 195) (Dehalococcoides ethenogenes (strain 195)), this protein is Large ribosomal subunit protein bL32.